The chain runs to 207 residues: Large ribosomal subunit protein bL25 (207 aa).

This sequence belongs to the bacterial ribosomal protein bL25 family. CTC subfamily. Part of the 50S ribosomal subunit; part of the 5S rRNA/L5/L18/L25 subcomplex. Contacts the 5S rRNA. Binds to the 5S rRNA independently of L5 and L18.

In terms of biological role, this is one of the proteins that binds to the 5S RNA in the ribosome where it forms part of the central protuberance. The chain is Large ribosomal subunit protein bL25 from Azorhizobium caulinodans (strain ATCC 43989 / DSM 5975 / JCM 20966 / LMG 6465 / NBRC 14845 / NCIMB 13405 / ORS 571).